The chain runs to 403 residues: Metacaspase-1A (403 aa).

Residues 1-93 (MQHHHHSSYG…PPTDPVAFGH (93 aa)) form a disordered region. Residues 18–31 (GQAYRQQQPYYGQP) are compositionally biased toward low complexity. Residues 32–55 (SPQPYAQPPPPNYQRPSGYGPPPS) are compositionally biased toward pro residues. Active-site residues include His194 and Cys250.

It belongs to the peptidase C14B family.

Involved in cell death (apoptosis). This Aspergillus terreus (strain NIH 2624 / FGSC A1156) protein is Metacaspase-1A (casA).